The following is a 478-amino-acid chain: Ninja-family protein 7 (478 aa).

Disordered regions lie at residues 1–247, 336–374, and 454–478; these read MDDD…LTPG, SFTAKDKADQTGTKQVDDGKKPREAGASSSAHAEDEKKA, and DAPAQDNSATLPAFPAGNQATSAEN. The segment covering 23–35 has biased composition (basic and acidic residues); the sequence is KARDAPLEPKAEP. Positions 169–179 are enriched in polar residues; the sequence is ISISTDDGSTG. A compositionally biased stretch (acidic residues) spans 180 to 189; that stretch reads ENEDVAESEA. Residues 233–242 show a composition bias toward low complexity; the sequence is SFSGSESSSG. Positions 339 to 359 are enriched in basic and acidic residues; it reads AKDKADQTGTKQVDDGKKPRE.

It belongs to the Ninja family.

The protein resides in the nucleus. This chain is Ninja-family protein 7, found in Zea mays (Maize).